Consider the following 258-residue polypeptide: Phosphate import ATP-binding protein PstB (258 aa).

The region spanning Leu12 to Ile253 is the ABC transporter domain. Residue Gly44–Ser51 participates in ATP binding.

The protein belongs to the ABC transporter superfamily. Phosphate importer (TC 3.A.1.7) family. The complex is composed of two ATP-binding proteins (PstB), two transmembrane proteins (PstC and PstA) and a solute-binding protein (PstS).

The protein resides in the cell inner membrane. The catalysed reaction is phosphate(out) + ATP + H2O = ADP + 2 phosphate(in) + H(+). Its function is as follows. Part of the ABC transporter complex PstSACB involved in phosphate import. Responsible for energy coupling to the transport system. This is Phosphate import ATP-binding protein PstB from Bordetella parapertussis (strain 12822 / ATCC BAA-587 / NCTC 13253).